We begin with the raw amino-acid sequence, 329 residues long: Ribosomal RNA small subunit methyltransferase C (329 aa).

Belongs to the methyltransferase superfamily. RsmC family. In terms of assembly, monomer.

Its subcellular location is the cytoplasm. The catalysed reaction is guanosine(1207) in 16S rRNA + S-adenosyl-L-methionine = N(2)-methylguanosine(1207) in 16S rRNA + S-adenosyl-L-homocysteine + H(+). In terms of biological role, specifically methylates the guanine in position 1207 of 16S rRNA in the 30S particle. This Actinobacillus pleuropneumoniae serotype 5b (strain L20) protein is Ribosomal RNA small subunit methyltransferase C.